A 120-amino-acid polypeptide reads, in one-letter code: U-scoloptoxin(16)-Er2a (120 aa).

Residues 1–26 form the signal peptide; that stretch reads MNTVSVVQFLAVGCAVFVLYGRGVFA.

The protein belongs to the scoloptoxin-16 family. Post-translationally, contains 4 disulfide bonds. In terms of tissue distribution, expressed by the venom gland.

It is found in the secreted. The chain is U-scoloptoxin(16)-Er2a from Ethmostigmus rubripes (Giant centipede).